The following is a 149-amino-acid chain: Low molecular weight protein-tyrosine-phosphatase Wzb (149 aa).

The Nucleophile role is filled by Cys9. Residue Arg15 is part of the active site. Asp115 acts as the Proton donor in catalysis.

Belongs to the low molecular weight phosphotyrosine protein phosphatase family.

It catalyses the reaction O-phospho-L-tyrosyl-[protein] + H2O = L-tyrosyl-[protein] + phosphate. Its pathway is glycan metabolism; exopolysaccharide biosynthesis. In terms of biological role, dephosphorylates Wzc. Required for the extracellular polysaccharide colanic acid synthesis. Probably involved in the export of colanic acid from the cell to medium. Involved in protection of cells against contact-dependent growth inhibition (CDI). This Salmonella typhimurium (strain LT2 / SGSC1412 / ATCC 700720) protein is Low molecular weight protein-tyrosine-phosphatase Wzb (wzb).